Here is a 234-residue protein sequence, read N- to C-terminus: MKTVNVHGFEASSKEEFQVIQSSLVKRIKLISDFKEEDIKLCAGVDLAYWTKGEKQYGVCCIIVIDYNTGEIIEKAYDYGEIEVPYMPGFLAFRELPLVIKTVKKLKNEPDIFMFDGNGYLHYNHMGIATHASFFLNKPTIGVAKSYLKVAGVDFEMPESFEGAFKDIVINEEVYGRVLRTKKDVKPIFVSCGNYIDLETCTKICSKLINNDSRLPITVRLADLETHKRRSELS.

Mg(2+)-binding residues include aspartate 46 and aspartate 116.

This sequence belongs to the endonuclease V family. Requires Mg(2+) as cofactor.

Its subcellular location is the cytoplasm. It catalyses the reaction Endonucleolytic cleavage at apurinic or apyrimidinic sites to products with a 5'-phosphate.. In terms of biological role, DNA repair enzyme involved in the repair of deaminated bases. Selectively cleaves double-stranded DNA at the second phosphodiester bond 3' to a deoxyinosine leaving behind the intact lesion on the nicked DNA. The chain is Endonuclease V from Clostridium acetobutylicum (strain ATCC 824 / DSM 792 / JCM 1419 / IAM 19013 / LMG 5710 / NBRC 13948 / NRRL B-527 / VKM B-1787 / 2291 / W).